The chain runs to 166 residues: Ribonuclease H2 subunit C (166 aa).

Residue methionine 1 is modified to N-acetylmethionine.

This sequence belongs to the RNase H2 subunit C family. The RNase H2 complex is a heterotrimer composed of the catalytic subunit RNASEH2A and the non-catalytic subunits RNASEH2B and RNASEH2C.

The protein localises to the nucleus. In terms of biological role, non catalytic subunit of RNase H2, an endonuclease that specifically degrades the RNA of RNA:DNA hybrids. Participates in DNA replication, possibly by mediating the removal of lagging-strand Okazaki fragment RNA primers during DNA replication. Mediates the excision of single ribonucleotides from DNA:RNA duplexes. The sequence is that of Ribonuclease H2 subunit C (Rnaseh2c) from Mus musculus (Mouse).